A 616-amino-acid polypeptide reads, in one-letter code: Chaperone protein HscA (616 aa).

It belongs to the heat shock protein 70 family.

In terms of biological role, chaperone involved in the maturation of iron-sulfur cluster-containing proteins. Has a low intrinsic ATPase activity which is markedly stimulated by HscB. Involved in the maturation of IscU. The chain is Chaperone protein HscA from Pectobacterium atrosepticum (strain SCRI 1043 / ATCC BAA-672) (Erwinia carotovora subsp. atroseptica).